The chain runs to 419 residues: Gamma-glutamyl phosphate reductase (419 aa).

Belongs to the gamma-glutamyl phosphate reductase family.

Its subcellular location is the cytoplasm. It catalyses the reaction L-glutamate 5-semialdehyde + phosphate + NADP(+) = L-glutamyl 5-phosphate + NADPH + H(+). It participates in amino-acid biosynthesis; L-proline biosynthesis; L-glutamate 5-semialdehyde from L-glutamate: step 2/2. Its function is as follows. Catalyzes the NADPH-dependent reduction of L-glutamate 5-phosphate into L-glutamate 5-semialdehyde and phosphate. The product spontaneously undergoes cyclization to form 1-pyrroline-5-carboxylate. The protein is Gamma-glutamyl phosphate reductase of Caldicellulosiruptor bescii (strain ATCC BAA-1888 / DSM 6725 / KCTC 15123 / Z-1320) (Anaerocellum thermophilum).